The following is a 32-amino-acid chain: Putative leucine-rich repeat protein PS14 (32 aa).

The polypeptide is Putative leucine-rich repeat protein PS14 (Pinus strobus (Eastern white pine)).